The following is a 223-amino-acid chain: Thiamine-phosphate synthase (223 aa).

4-amino-2-methyl-5-(diphosphooxymethyl)pyrimidine contacts are provided by residues 42–46 (QLRDK) and Asn83. The Mg(2+) site is built by Asp84 and Asp103. Position 122 (Ser122) interacts with 4-amino-2-methyl-5-(diphosphooxymethyl)pyrimidine. 2-[(2R,5Z)-2-carboxy-4-methylthiazol-5(2H)-ylidene]ethyl phosphate is bound at residue 148–150 (TPT). Lys151 contributes to the 4-amino-2-methyl-5-(diphosphooxymethyl)pyrimidine binding site. Gly179 contributes to the 2-[(2R,5Z)-2-carboxy-4-methylthiazol-5(2H)-ylidene]ethyl phosphate binding site.

Belongs to the thiamine-phosphate synthase family. Mg(2+) serves as cofactor.

It catalyses the reaction 2-[(2R,5Z)-2-carboxy-4-methylthiazol-5(2H)-ylidene]ethyl phosphate + 4-amino-2-methyl-5-(diphosphooxymethyl)pyrimidine + 2 H(+) = thiamine phosphate + CO2 + diphosphate. The catalysed reaction is 2-(2-carboxy-4-methylthiazol-5-yl)ethyl phosphate + 4-amino-2-methyl-5-(diphosphooxymethyl)pyrimidine + 2 H(+) = thiamine phosphate + CO2 + diphosphate. It carries out the reaction 4-methyl-5-(2-phosphooxyethyl)-thiazole + 4-amino-2-methyl-5-(diphosphooxymethyl)pyrimidine + H(+) = thiamine phosphate + diphosphate. It functions in the pathway cofactor biosynthesis; thiamine diphosphate biosynthesis; thiamine phosphate from 4-amino-2-methyl-5-diphosphomethylpyrimidine and 4-methyl-5-(2-phosphoethyl)-thiazole: step 1/1. Functionally, condenses 4-methyl-5-(beta-hydroxyethyl)thiazole monophosphate (THZ-P) and 2-methyl-4-amino-5-hydroxymethyl pyrimidine pyrophosphate (HMP-PP) to form thiamine monophosphate (TMP). The sequence is that of Thiamine-phosphate synthase from Mycolicibacterium paratuberculosis (strain ATCC BAA-968 / K-10) (Mycobacterium paratuberculosis).